The sequence spans 224 residues: ATP-dependent dethiobiotin synthetase BioD (224 aa).

12–17 contacts ATP; the sequence is GVGKTF. Thr-16 provides a ligand contact to Mg(2+). Lys-37 is a catalytic residue. Thr-41 contributes to the substrate binding site. ATP contacts are provided by residues Asn-52, 107-110, 167-168, 197-199, and Glu-204; these read EGAG, GS, and PEG. Residues Asn-52 and Glu-107 each contribute to the Mg(2+) site.

This sequence belongs to the dethiobiotin synthetase family. Homodimer. Mg(2+) is required as a cofactor.

It is found in the cytoplasm. It carries out the reaction (7R,8S)-7,8-diammoniononanoate + CO2 + ATP = (4R,5S)-dethiobiotin + ADP + phosphate + 3 H(+). Its pathway is cofactor biosynthesis; biotin biosynthesis; biotin from 7,8-diaminononanoate: step 1/2. Catalyzes a mechanistically unusual reaction, the ATP-dependent insertion of CO2 between the N7 and N8 nitrogen atoms of 7,8-diaminopelargonic acid (DAPA, also called 7,8-diammoniononanoate) to form a ureido ring. This Corynebacterium glutamicum (strain ATCC 13032 / DSM 20300 / JCM 1318 / BCRC 11384 / CCUG 27702 / LMG 3730 / NBRC 12168 / NCIMB 10025 / NRRL B-2784 / 534) protein is ATP-dependent dethiobiotin synthetase BioD.